Here is a 117-residue protein sequence, read N- to C-terminus: Large ribosomal subunit protein bL20c (117 aa).

It belongs to the bacterial ribosomal protein bL20 family.

Its subcellular location is the plastid. The protein resides in the chloroplast. Binds directly to 23S ribosomal RNA and is necessary for the in vitro assembly process of the 50S ribosomal subunit. It is not involved in the protein synthesizing functions of that subunit. The chain is Large ribosomal subunit protein bL20c from Buxus microphylla (Littleleaf boxwood).